The chain runs to 726 residues: MAR-binding filament-like protein 1 (726 aa).

A chloroplast-targeting transit peptide spans 1–41; it reads MGFLIGGSCFVPSVPLHSRFLSSPSSSSSSSPSSSQFGLLC. The transit peptide at 42–95 directs the protein to the thylakoid; the sequence is SSNVAKFKRRRPTLASLNQEDGYEYDVASAKRRAFLLVGISVLPFLQLRSPALA. The Lumenal, thylakoid portion of the chain corresponds to 96–124; that stretch reads DERGNEIKTSKVDLETEVAVVSEGTSPNP. Residues 125-145 form a helical membrane-spanning segment; it reads FLALLNGLGIFSAGVLGALYA. Residues 144–691 adopt a coiled-coil conformation; the sequence is YALARQDTKA…KGEILRMRSQ (548 aa). The Stromal segment spans residues 146–726; it reads LARQDTKAAE…VRRRKSSTSS (581 aa). Residues 678-726 are disordered; that stretch reads LGSAKGEILRMRSQPDSVKAVNSTDNKEKSDNTVTVKKVVRRRKSSTSS. The segment covering 691-701 has biased composition (polar residues); the sequence is QPDSVKAVNST. The Nuclear localization signal signature appears at 715–722; sequence KVVRRRKS. Basic residues predominate over residues 715 to 726; that stretch reads KVVRRRKSSTSS.

Interacts with PTST2; the interaction is essential for the initiation of starch granules biosynthesis in leaf chloroplasts, for the correct location of the process in the stromal spaces between the thylakoid membranes, and for the association of PTST2 with the thylakoid membranes. Predicted to be translocated into the thylakoid by the Tat system. The position of the transit peptide cleavages have not been experimentally proven.

The protein resides in the plastid. It localises to the chloroplast. Its subcellular location is the chloroplast thylakoid membrane. The protein localises to the chloroplast stroma. It is found in the chloroplast nucleoid. The protein resides in the nucleus. It localises to the nucleus matrix. Its function is as follows. DNA-binding protein required for the initiation of starch granules biosynthesis in leaf chloroplasts. Anchored to the thylakoid membranes with its C-terminus facing into the stroma where it is essential for localizing PTST2 and SS4 to the stromal spaces between the thylakoid membranes in order to begin starch granule formation. Associated with leaf chloroplastic nucleoids in vivo. Binds to various chloroplastic double-stranded DNA fragments without particular sequence specificity in vitro. May function at the interface between nucleoids and thylakoids possibly by anchoring nucleoids to the thylakoid membrane system in mature chloroplasts. Likely to participate in nuclear architecture by connecting chromatin with the nuclear matrix and potentially with the nuclear envelope. The protein is MAR-binding filament-like protein 1 of Arabidopsis thaliana (Mouse-ear cress).